A 111-amino-acid chain; its full sequence is Nucleoid-associated protein CYA_1369 (111 aa).

It belongs to the YbaB/EbfC family. Homodimer.

Its subcellular location is the cytoplasm. The protein resides in the nucleoid. Functionally, binds to DNA and alters its conformation. May be involved in regulation of gene expression, nucleoid organization and DNA protection. This Synechococcus sp. (strain JA-3-3Ab) (Cyanobacteria bacterium Yellowstone A-Prime) protein is Nucleoid-associated protein CYA_1369.